A 346-amino-acid polypeptide reads, in one-letter code: Propane 2-monooxygenase, reductase component (346 aa).

The 2Fe-2S ferredoxin-type domain occupies 5–94 (HKISFEPVDI…DCEIELLNFD (90 aa)). Positions 39, 44, 46, and 78 each coordinate [2Fe-2S] cluster. The FAD-binding FR-type domain maps to 104-205 (IQDVTTKVAA…NGPYGSCTLR (102 aa)).

It belongs to the bacterial ring-hydroxylating dioxygenase ferredoxin reductase family. The propane 2-monooxygenase multicomponent enzyme system is composed of an electron transfer component and a monooxygenase component interacting with the effector protein PrmD. The electron transfer component is composed of a reductase (PrmB), and the monooxygenase component is formed by a large subunit (PrmA) and a small subunit (PrmC). It depends on FAD as a cofactor. The cofactor is [2Fe-2S] cluster.

In terms of biological role, reductase component of the propane 2-monooxygenase multicomponent enzyme system which is involved in the degradation of propane via the O2-dependent hydroxylation of propane. Reductase catalyzes the transfer of electrons from NADH or NADPH to monooxygenase. The polypeptide is Propane 2-monooxygenase, reductase component (Gordonia sp. (strain TY-5)).